The chain runs to 195 residues: Probable GTP-binding protein EngB (195 aa).

Residues 22–194 enclose the EngB-type G domain; sequence LKGEVAFVGR…LDLISTLLKE (173 aa). GTP-binding positions include 30–37, 56–60, 74–77, 141–144, and 173–175; these read GRSNVGKS, GKTRS, DLPG, TKMD, and TSS. S37 and T58 together coordinate Mg(2+).

Belongs to the TRAFAC class TrmE-Era-EngA-EngB-Septin-like GTPase superfamily. EngB GTPase family. Mg(2+) is required as a cofactor.

In terms of biological role, necessary for normal cell division and for the maintenance of normal septation. The sequence is that of Probable GTP-binding protein EngB from Thermotoga petrophila (strain ATCC BAA-488 / DSM 13995 / JCM 10881 / RKU-1).